The following is a 408-amino-acid chain: Peptidase T (408 aa).

Residue H78 coordinates Zn(2+). D80 is an active-site residue. A Zn(2+)-binding site is contributed by D140. The Proton acceptor role is filled by E174. Positions 175, 197, and 379 each coordinate Zn(2+).

This sequence belongs to the peptidase M20B family. The cofactor is Zn(2+).

The protein resides in the cytoplasm. The enzyme catalyses Release of the N-terminal residue from a tripeptide.. Cleaves the N-terminal amino acid of tripeptides. The sequence is that of Peptidase T from Staphylococcus aureus (strain bovine RF122 / ET3-1).